The sequence spans 269 residues: Autophagy-related protein 5 (269 aa).

A Glycyl lysine isopeptide (Lys-Gly) (interchain with G-Cter in ATG12) cross-link involves residue K102.

The protein belongs to the ATG5 family. Conjugated with ATG12. The ATG5-ATG12 conjugate forms a complex with several units of ATG16. The ATG12-ATG5 conjugate also associates with ATG3. Post-translationally, conjugated to ATG12; which is essential for autophagy. Conjugation with ATG12 involves ATG7 as an E1-like activating enzyme and ATG10 as an E2-like conjugating enzyme.

It localises to the preautophagosomal structure membrane. Its function is as follows. Involved in cytoplasm to vacuole transport (Cvt) and autophagic vesicle formation. Autophagy is essential for maintenance of amino acid levels and protein synthesis under nitrogen starvation. Required for selective autophagic degradation of the nucleus (nucleophagy). Also required for mitophagy, which eliminates defective or superfluous mitochondria in order to fulfill cellular energy requirements and prevent excess ROS production. Conjugation with ATG12, through a ubiquitin-like conjugating system involving ATG7 as an E1-like activating enzyme and ATG10 as an E2-like conjugating enzyme, is essential for its function. The ATG12-ATG5 conjugate acts as an E3-like enzyme which is required for lipidation of ATG8 and ATG8 association to the vesicle membranes. ATG12-ATG5 rearranges the ATG3 catalytic center and enhances its E2 activity. Required for proper vegetative growth, asexual/sexual reproduction, but, unlike several plant and animal pathogenic fungi, where ATG5 is required for infection, in B.bassiana it is dispensable for pathogenesis. In Beauveria bassiana (strain ARSEF 2860) (White muscardine disease fungus), this protein is Autophagy-related protein 5.